The chain runs to 198 residues: Clytin (198 aa).

Residues 1–9 constitute a propeptide that is removed on maturation; the sequence is MADTASKYA. EF-hand domains lie at 20–55, 60–95, 119–148, and 149–184; these read KWVN…DICA, TPEQ…VDGW, EAVF…SGIC, and SSDE…FWYT. 5 residues coordinate Ca(2+): D33, N35, D37, K39, and E44. D126, D128, S130, S132, E137, D162, D164, S166, K168, and E173 together coordinate Ca(2+).

This sequence belongs to the aequorin family.

Functionally, ca(2+)-dependent bioluminescence photoprotein. Displays an emission peak at 470 nm (blue light). Trace amounts of calcium ion trigger the intramolecular oxidation of the chromophore, coelenterazine into coelenteramide and CO(2) with the concomitant emission of light. The protein is Clytin of Clytia gregaria (Gregarious jellyfish).